Reading from the N-terminus, the 265-residue chain is Gamma-secretase subunit APH-1A (265 aa).

Residues 1-2 (MG) lie on the Lumenal side of the membrane. A helical membrane pass occupies residues 3 to 23 (AAVFFGCTFVAFGPAFSLFLI). Over 24–31 (TVAGDPLR) the chain is Cytoplasmic. The chain crosses the membrane as a helical span at residues 32–52 (VIILVAGAFFWLVSLLLASVV). Topologically, residues 53 to 68 (WFILVHVTDRSDARLQ) are lumenal. A helical transmembrane segment spans residues 69-89 (YGLLIFGAAVSVLLQEVFRFA). At 90–118 (YYKLLKKADEGLASLSEDGRSPISIRQMA) the chain is on the cytoplasmic side. A helical transmembrane segment spans residues 119-139 (YVSGLSFGIISGVFSVINILA). The Lumenal portion of the chain corresponds to 140–158 (DALGPGVVGIHGDSPYYFL). A helical transmembrane segment spans residues 159-179 (TSAFLTAAIILLHTFWGVVFF). The Cytoplasmic segment spans residues 180–186 (DACERRR). A helical membrane pass occupies residues 187 to 207 (YWALGLVVGSHLLTSGLTFLN). The Lumenal portion of the chain corresponds to 208-213 (PWYEAS). Residues 214–234 (LLPIYAVTVSMGLWAFITAGG) form a helical membrane-spanning segment. The Cytoplasmic segment spans residues 235-265 (SLRSIQRSLSCRRQEDSRVMVYSALRIPPED).

The protein belongs to the APH-1 family. As to quaternary structure, the functional gamma-secretase complex is composed of at least four polypeptides: a presenilin homodimer (PSEN1 or PSEN2), nicastrin (NCSTN), APH1 (APH1A or APH1B) and PSENEN/PEN2.

The protein resides in the endoplasmic reticulum membrane. It localises to the golgi apparatus. The protein localises to the golgi stack membrane. Its function is as follows. Non-catalytic subunit of the gamma-secretase complex, an endoprotease complex that catalyzes the intramembrane cleavage of integral membrane proteins such as Notch receptors and APP (amyloid-beta precursor protein). Required for normal gamma-secretase assembly. The gamma-secretase complex plays a role in Notch and Wnt signaling cascades and regulation of downstream processes via its role in processing key regulatory proteins, and by regulating cytosolic CTNNB1 levels. This Mus musculus (Mouse) protein is Gamma-secretase subunit APH-1A (Aph1a).